The chain runs to 426 residues: Serine--tRNA ligase (426 aa).

230 to 232 provides a ligand contact to L-serine; that stretch reads TAE. Residue 261–263 coordinates ATP; the sequence is RSE. Glu284 is an L-serine binding site. Residue 348–351 coordinates ATP; it reads EISS. Ser384 is a binding site for L-serine.

Belongs to the class-II aminoacyl-tRNA synthetase family. Type-1 seryl-tRNA synthetase subfamily. Homodimer. The tRNA molecule binds across the dimer.

It localises to the cytoplasm. It catalyses the reaction tRNA(Ser) + L-serine + ATP = L-seryl-tRNA(Ser) + AMP + diphosphate + H(+). The catalysed reaction is tRNA(Sec) + L-serine + ATP = L-seryl-tRNA(Sec) + AMP + diphosphate + H(+). It functions in the pathway aminoacyl-tRNA biosynthesis; selenocysteinyl-tRNA(Sec) biosynthesis; L-seryl-tRNA(Sec) from L-serine and tRNA(Sec): step 1/1. Catalyzes the attachment of serine to tRNA(Ser). Is also able to aminoacylate tRNA(Sec) with serine, to form the misacylated tRNA L-seryl-tRNA(Sec), which will be further converted into selenocysteinyl-tRNA(Sec). The protein is Serine--tRNA ligase of Novosphingobium aromaticivorans (strain ATCC 700278 / DSM 12444 / CCUG 56034 / CIP 105152 / NBRC 16084 / F199).